The sequence spans 411 residues: S-adenosylmethionine synthase (411 aa).

H15 contributes to the ATP binding site. D17 is a Mg(2+) binding site. E43 contributes to the K(+) binding site. Positions 56 and 99 each coordinate L-methionine. The tract at residues 99–109 is flexible loop; sequence QSPDIAQGVDT. ATP contacts are provided by residues 174-176, 247-248, D256, 262-263, A279, and K283; these read DGK, RF, and RK. Residue D256 coordinates L-methionine. Residue K287 coordinates L-methionine.

It belongs to the AdoMet synthase family. Homotetramer; dimer of dimers. Mg(2+) is required as a cofactor. The cofactor is K(+).

Its subcellular location is the cytoplasm. It catalyses the reaction L-methionine + ATP + H2O = S-adenosyl-L-methionine + phosphate + diphosphate. It functions in the pathway amino-acid biosynthesis; S-adenosyl-L-methionine biosynthesis; S-adenosyl-L-methionine from L-methionine: step 1/1. Its function is as follows. Catalyzes the formation of S-adenosylmethionine (AdoMet) from methionine and ATP. The overall synthetic reaction is composed of two sequential steps, AdoMet formation and the subsequent tripolyphosphate hydrolysis which occurs prior to release of AdoMet from the enzyme. This is S-adenosylmethionine synthase from Streptomyces spectabilis.